Consider the following 193-residue polypeptide: 3-isopropylmalate dehydratase small subunit (193 aa).

This sequence belongs to the LeuD family. LeuD type 1 subfamily. In terms of assembly, heterodimer of LeuC and LeuD.

It carries out the reaction (2R,3S)-3-isopropylmalate = (2S)-2-isopropylmalate. It functions in the pathway amino-acid biosynthesis; L-leucine biosynthesis; L-leucine from 3-methyl-2-oxobutanoate: step 2/4. In terms of biological role, catalyzes the isomerization between 2-isopropylmalate and 3-isopropylmalate, via the formation of 2-isopropylmaleate. The polypeptide is 3-isopropylmalate dehydratase small subunit (Bacillus anthracis (strain CDC 684 / NRRL 3495)).